Consider the following 55-residue polypeptide: Large ribosomal subunit protein bL33A (55 aa).

This sequence belongs to the bacterial ribosomal protein bL33 family.

This chain is Large ribosomal subunit protein bL33A, found in Mycobacterium sp. (strain KMS).